The chain runs to 192 residues: Xanthine phosphoribosyltransferase (192 aa).

Residues Leu20 and Asn27 each contribute to the xanthine site. 128-132 (AHGEA) serves as a coordination point for 5-phospho-alpha-D-ribose 1-diphosphate. Position 156 (Lys156) interacts with xanthine.

It belongs to the purine/pyrimidine phosphoribosyltransferase family. Xpt subfamily. As to quaternary structure, homodimer.

The protein localises to the cytoplasm. The catalysed reaction is XMP + diphosphate = xanthine + 5-phospho-alpha-D-ribose 1-diphosphate. Its pathway is purine metabolism; XMP biosynthesis via salvage pathway; XMP from xanthine: step 1/1. Its function is as follows. Converts the preformed base xanthine, a product of nucleic acid breakdown, to xanthosine 5'-monophosphate (XMP), so it can be reused for RNA or DNA synthesis. In Lactobacillus acidophilus (strain ATCC 700396 / NCK56 / N2 / NCFM), this protein is Xanthine phosphoribosyltransferase.